Consider the following 1059-residue polypeptide: Isoleucine--tRNA ligase (1059 aa).

Residues 47–57 (PYTSGQMHLGT) carry the 'HIGH' region motif. Residues 606 to 610 (KMSKS) carry the 'KMSKS' region motif. Residue Lys609 coordinates ATP.

The protein belongs to the class-I aminoacyl-tRNA synthetase family. IleS type 2 subfamily. As to quaternary structure, monomer. The cofactor is Zn(2+).

The protein localises to the cytoplasm. The catalysed reaction is tRNA(Ile) + L-isoleucine + ATP = L-isoleucyl-tRNA(Ile) + AMP + diphosphate. Its function is as follows. Catalyzes the attachment of isoleucine to tRNA(Ile). As IleRS can inadvertently accommodate and process structurally similar amino acids such as valine, to avoid such errors it has two additional distinct tRNA(Ile)-dependent editing activities. One activity is designated as 'pretransfer' editing and involves the hydrolysis of activated Val-AMP. The other activity is designated 'posttransfer' editing and involves deacylation of mischarged Val-tRNA(Ile). This is Isoleucine--tRNA ligase from Haloquadratum walsbyi (strain DSM 16790 / HBSQ001).